The chain runs to 568 residues: AT-rich interactive domain-containing protein 3B (568 aa).

Met-1 is modified (N-acetylmethionine). Low complexity predominate over residues 1-22; sequence MEPLQQQQQQQQQKQPQQPLLQ. The interval 1 to 174 is disordered; it reads MEPLQQQQQQ…SVPTAGQPSW (174 aa). Ser-87 is modified (phosphoserine). Positions 88–107 are enriched in acidic residues; it reads EPEEEEGGLEDEDGDDDVAE. Basic and acidic residues predominate over residues 151–160; it reads TKEDHTKDAS. The interval 201 to 374 is interaction with RB1; the sequence is SRDFAKLYEL…SSPKIRFSIL (174 aa). Positions 213 to 305 constitute an ARID domain; the sequence is DPERKEFLDD…YLYAYECEKK (93 aa). Ser-309 is modified (phosphoserine). Position 370 is an asymmetric dimethylarginine (Arg-370). The disordered stretch occupies residues 378–403; that stretch reads SSSGTSASSPRIPPASTLRKGDGVPV. The 98-residue stretch at 425 to 522 folds into the REKLES domain; it reads GPLEHLRERL…GVLFAQKPVV (98 aa). Residues 495–518 form an interaction with ARID3A region; it reads SNIGSINMSVDIDGTTYTGVLFAQ. The span at 529–559 shows a compositional bias: low complexity; sequence TPQSIGSSASSSNSSSSHCSPSPTSSRGTPS. The interval 529–568 is disordered; it reads TPQSIGSSASSSNSSSSHCSPSPTSSRGTPSAEPSTSWSL.

Heterodimer with ARID3A. Interacts with unphosphorylated RB1. In terms of tissue distribution, expressed at high levels in testis. Also expressed in prostate, thyroid and thymus.

The protein localises to the nucleus. Transcription factor involved in the production of cranial mesenchymal tissues. Favors nuclear targeting of ARID3A. The chain is AT-rich interactive domain-containing protein 3B (Arid3b) from Mus musculus (Mouse).